The chain runs to 224 residues: uncharacterized protein (224 aa).

This is an uncharacterized protein from Saccharomyces cerevisiae (strain ATCC 204508 / S288c) (Baker's yeast).